Consider the following 201-residue polypeptide: Natural cytotoxicity triggering receptor 3 (201 aa).

Positions 1 to 18 are cleaved as a signal peptide; sequence MAWMLLLILIMVHPGSCA. Positions 19–126 constitute an Ig-like domain; the sequence is LWVSQPPEIR…VGTGNGTRLV (108 aa). The Extracellular portion of the chain corresponds to 19-135; it reads LWVSQPPEIR…VVEKEHPQLG (117 aa). Cysteine 39 and cysteine 108 form a disulfide bridge. Residues asparagine 42 and asparagine 121 are each glycosylated (N-linked (GlcNAc...) asparagine). The helical transmembrane segment at 136–156 threads the bilayer; sequence AGTVLLLRAGFYAVSFLSVAV. Residues 157 to 201 are Cytoplasmic-facing; the sequence is GSTVYYQGKCLTWKGPRRQLPAVVPAPLPPPCGSSAHLLPPVPGG.

Belongs to the natural cytotoxicity receptor (NCR) family. Homodimer in the unliganted form. Interacts with CD3Z. Interacts with and is activated by binding to NCR3LG1. Interacts with and is activated by binding to BAG6. Interacts with and is inhibited by binding to LGALS3. Selectively expressed by all resting and activated NK cells and weakly expressed in spleen.

It localises to the cell membrane. Functionally, cell membrane receptor of natural killer/NK cells that is activated by binding of extracellular ligands including BAG6 and NCR3LG1. Stimulates NK cells cytotoxicity toward neighboring cells producing these ligands. It controls, for instance, NK cells cytotoxicity against tumor cells. Engagement of NCR3 by BAG6 also promotes myeloid dendritic cells (DC) maturation, both through killing DCs that did not acquire a mature phenotype, and inducing the release by NK cells of TNFA and IFNG which promote DC maturation. The polypeptide is Natural cytotoxicity triggering receptor 3 (Homo sapiens (Human)).